A 153-amino-acid polypeptide reads, in one-letter code: uncharacterized protein (153 aa).

The disordered stretch occupies residues 17–78; the sequence is IYIHTPHPHP…HTTLSNLSLN (62 aa). The span at 22 to 38 shows a compositional bias: basic residues; that stretch reads PHPHPHPHPHTPTHTHP.

This is an uncharacterized protein from Saccharomyces cerevisiae (strain ATCC 204508 / S288c) (Baker's yeast).